Reading from the N-terminus, the 149-residue chain is Calmodulin-3 (149 aa).

A2 carries the post-translational modification N-acetylalanine. 4 consecutive EF-hand domains span residues 8 to 43 (DQIA…LGQN), 44 to 79 (PTEA…KMKD), 81 to 116 (DSEE…LGEK), and 117 to 149 (LTDE…MMAK). Ca(2+)-binding residues include D21, D23, D25, C27, E32, D57, D59, N61, T63, E68, D94, D96, N98, and E105. K116 is modified (N6,N6,N6-trimethyllysine). D130, D132, D134, Q136, and E141 together coordinate Ca(2+).

It belongs to the calmodulin family.

Functionally, calmodulin mediates the control of a large number of enzymes, ion channels and other proteins by Ca(2+). Among the enzymes to be stimulated by the calmodulin-Ca(2+) complex are a number of protein kinases and phosphatases. This is Calmodulin-3 (CAM3) from Oryza sativa subsp. indica (Rice).